Consider the following 460-residue polypeptide: ESX-1 secretion-associated protein EspB (460 aa).

Disordered stretches follow at residues 92–116 (LDND…SAEL), 303–335 (PSDG…PADT), and 405–441 (LGGG…TEDR).

Post-translationally, cleaved in the C-terminal region by MycP1.

The protein localises to the secreted. This is ESX-1 secretion-associated protein EspB from Mycobacterium tuberculosis (strain CDC 1551 / Oshkosh).